We begin with the raw amino-acid sequence, 243 residues long: Zwei Ig domain protein zig-6 (243 aa).

The N-terminal stretch at 1 to 20 is a signal peptide; the sequence is MTKLCLLLLPLVFLVSYSFA. 2 consecutive Ig-like C2-type domains span residues 30–118 and 133–212; these read PNAN…MDVI and GQVL…KTVT. A disulfide bond links C47 and C102. N-linked (GlcNAc...) asparagine glycosylation is found at N91 and N142. C145 and C196 form a disulfide bridge.

Expressed in head and tail body wall muscles.

Its subcellular location is the secreted. Functionally, probably not involved in maintaining the position of ASI and ASH head neuron cell bodies and ventral nerve cord axons of PVQ, PVP, RMEV, AVK and HSN neurons. In Caenorhabditis elegans, this protein is Zwei Ig domain protein zig-6.